We begin with the raw amino-acid sequence, 121 residues long: Large ribosomal subunit protein bL12 (121 aa).

Belongs to the bacterial ribosomal protein bL12 family. As to quaternary structure, homodimer. Part of the ribosomal stalk of the 50S ribosomal subunit. Forms a multimeric L10(L12)X complex, where L10 forms an elongated spine to which 2 to 4 L12 dimers bind in a sequential fashion. Binds GTP-bound translation factors.

In terms of biological role, forms part of the ribosomal stalk which helps the ribosome interact with GTP-bound translation factors. Is thus essential for accurate translation. In Streptococcus uberis (strain ATCC BAA-854 / 0140J), this protein is Large ribosomal subunit protein bL12.